A 157-amino-acid chain; its full sequence is Ribosome maturation factor RimP (157 aa).

The protein belongs to the RimP family.

It localises to the cytoplasm. Required for maturation of 30S ribosomal subunits. This chain is Ribosome maturation factor RimP, found in Bacillus licheniformis (strain ATCC 14580 / DSM 13 / JCM 2505 / CCUG 7422 / NBRC 12200 / NCIMB 9375 / NCTC 10341 / NRRL NRS-1264 / Gibson 46).